A 286-amino-acid polypeptide reads, in one-letter code: Transcription factor MYB62 (286 aa).

2 HTH myb-type domains span residues 16–68 and 69–123; these read DEEL…LNYL and KPDI…QKQA. 2 DNA-binding regions (H-T-H motif) span residues 44–68 and 96–119; these read WNHV…LNYL and WSKI…RTRV.

In terms of tissue distribution, expressed in leaves and flowers.

The protein resides in the nucleus. In terms of biological role, transcription repressor of phosphate (Pi) starvation-induced genes. Negatively regulates Pi starvation responses via the repression of gibberellic acid (GA) biosynthesis and signaling. Modulates root architecture, phosphatase activity, and Pi uptake and accumulation. The polypeptide is Transcription factor MYB62 (Arabidopsis thaliana (Mouse-ear cress)).